The following is a 390-amino-acid chain: Dual-specificity RNA methyltransferase RlmN (390 aa).

The Proton acceptor role is filled by E110. The Radical SAM core domain occupies 116 to 355 (EADRATLCVS…VIIRKTRGDD (240 aa)). Residues C123 and C360 are joined by a disulfide bond. The [4Fe-4S] cluster site is built by C130, C134, and C137. S-adenosyl-L-methionine is bound by residues 184–185 (GE), S216, 238–240 (SLH), and N317. Residue C360 is the S-methylcysteine intermediate of the active site.

Belongs to the radical SAM superfamily. RlmN family. The cofactor is [4Fe-4S] cluster.

The protein resides in the cytoplasm. It carries out the reaction adenosine(2503) in 23S rRNA + 2 reduced [2Fe-2S]-[ferredoxin] + 2 S-adenosyl-L-methionine = 2-methyladenosine(2503) in 23S rRNA + 5'-deoxyadenosine + L-methionine + 2 oxidized [2Fe-2S]-[ferredoxin] + S-adenosyl-L-homocysteine. The enzyme catalyses adenosine(37) in tRNA + 2 reduced [2Fe-2S]-[ferredoxin] + 2 S-adenosyl-L-methionine = 2-methyladenosine(37) in tRNA + 5'-deoxyadenosine + L-methionine + 2 oxidized [2Fe-2S]-[ferredoxin] + S-adenosyl-L-homocysteine. In terms of biological role, specifically methylates position 2 of adenine 2503 in 23S rRNA and position 2 of adenine 37 in tRNAs. m2A2503 modification seems to play a crucial role in the proofreading step occurring at the peptidyl transferase center and thus would serve to optimize ribosomal fidelity. The chain is Dual-specificity RNA methyltransferase RlmN from Haemophilus influenzae (strain 86-028NP).